The primary structure comprises 531 residues: Phosphoinositide phospholipase C 9 (531 aa).

The region spanning 107-253 (RDMNAPLSHY…LQNKILISRR (147 aa)) is the PI-PLC X-box domain. In terms of domain architecture, PI-PLC Y-box spans 265–385 (ENGVELEIQE…GYVKKPNFLL (121 aa)). Residue Ser276 is modified to Phosphoserine. Positions 386–513 (NAGSSGVFYP…EGIRAVPLYD (128 aa)) constitute a C2 domain.

Ca(2+) serves as cofactor. Expressed in leaves, roots, flowers and siliques.

Its subcellular location is the cell membrane. It carries out the reaction a 1,2-diacyl-sn-glycero-3-phospho-(1D-myo-inositol-4,5-bisphosphate) + H2O = 1D-myo-inositol 1,4,5-trisphosphate + a 1,2-diacyl-sn-glycerol + H(+). The production of the second messenger molecules diacylglycerol (DAG) and inositol 1,4,5-trisphosphate (IP3) is mediated by activated phosphatidylinositol-specific phospholipase C enzymes. This is Phosphoinositide phospholipase C 9 (PLC9) from Arabidopsis thaliana (Mouse-ear cress).